Reading from the N-terminus, the 201-residue chain is Recombination protein RecR (201 aa).

Residues Cys60–Cys75 form a C4-type zinc finger. Residues Ala83 to Pro178 enclose the Toprim domain.

This sequence belongs to the RecR family.

In terms of biological role, may play a role in DNA repair. It seems to be involved in an RecBC-independent recombinational process of DNA repair. It may act with RecF and RecO. The chain is Recombination protein RecR from Rhodopseudomonas palustris (strain BisA53).